Here is a 363-residue protein sequence, read N- to C-terminus: Branched-chain-amino-acid aminotransferase 2 (363 aa).

Lys197 is modified (N6-(pyridoxal phosphate)lysine).

It belongs to the class-IV pyridoxal-phosphate-dependent aminotransferase family. Requires pyridoxal 5'-phosphate as cofactor.

It catalyses the reaction L-leucine + 2-oxoglutarate = 4-methyl-2-oxopentanoate + L-glutamate. The enzyme catalyses L-isoleucine + 2-oxoglutarate = (S)-3-methyl-2-oxopentanoate + L-glutamate. The catalysed reaction is L-valine + 2-oxoglutarate = 3-methyl-2-oxobutanoate + L-glutamate. It participates in amino-acid biosynthesis; L-isoleucine biosynthesis; L-isoleucine from 2-oxobutanoate: step 4/4. It functions in the pathway amino-acid biosynthesis; L-leucine biosynthesis; L-leucine from 3-methyl-2-oxobutanoate: step 4/4. The protein operates within amino-acid biosynthesis; L-valine biosynthesis; L-valine from pyruvate: step 4/4. With respect to regulation, inhibited by canaline. Transaminates branched-chain amino acids and ketoglutarate. This chain is Branched-chain-amino-acid aminotransferase 2 (ilvK), found in Bacillus subtilis (strain 168).